Reading from the N-terminus, the 110-residue chain is Ribonuclease P protein component 4 (110 aa).

4 residues coordinate Zn(2+): C65, C68, C94, and C97.

It belongs to the eukaryotic/archaeal RNase P protein component 4 family. As to quaternary structure, consists of a catalytic RNA component and at least 4-5 protein subunits. It depends on Zn(2+) as a cofactor.

It localises to the cytoplasm. The catalysed reaction is Endonucleolytic cleavage of RNA, removing 5'-extranucleotides from tRNA precursor.. Functionally, part of ribonuclease P, a protein complex that generates mature tRNA molecules by cleaving their 5'-ends. This chain is Ribonuclease P protein component 4, found in Methanococcus maripaludis (strain C6 / ATCC BAA-1332).